The sequence spans 807 residues: Glycerol-3-phosphate acyltransferase (807 aa).

Positions 306–311 (HRSHMD) match the HXXXXD motif motif.

It belongs to the GPAT/DAPAT family.

The protein resides in the cell inner membrane. The catalysed reaction is sn-glycerol 3-phosphate + an acyl-CoA = a 1-acyl-sn-glycero-3-phosphate + CoA. Its pathway is phospholipid metabolism; CDP-diacylglycerol biosynthesis; CDP-diacylglycerol from sn-glycerol 3-phosphate: step 1/3. The polypeptide is Glycerol-3-phosphate acyltransferase (plsB) (Escherichia coli O157:H7).